Consider the following 476-residue polypeptide: Aspartyl/glutamyl-tRNA(Asn/Gln) amidotransferase subunit B (476 aa).

It belongs to the GatB/GatE family. GatB subfamily. As to quaternary structure, heterotrimer of A, B and C subunits.

It carries out the reaction L-glutamyl-tRNA(Gln) + L-glutamine + ATP + H2O = L-glutaminyl-tRNA(Gln) + L-glutamate + ADP + phosphate + H(+). The enzyme catalyses L-aspartyl-tRNA(Asn) + L-glutamine + ATP + H2O = L-asparaginyl-tRNA(Asn) + L-glutamate + ADP + phosphate + 2 H(+). Allows the formation of correctly charged Asn-tRNA(Asn) or Gln-tRNA(Gln) through the transamidation of misacylated Asp-tRNA(Asn) or Glu-tRNA(Gln) in organisms which lack either or both of asparaginyl-tRNA or glutaminyl-tRNA synthetases. The reaction takes place in the presence of glutamine and ATP through an activated phospho-Asp-tRNA(Asn) or phospho-Glu-tRNA(Gln). The polypeptide is Aspartyl/glutamyl-tRNA(Asn/Gln) amidotransferase subunit B (Neisseria gonorrhoeae (strain ATCC 700825 / FA 1090)).